Here is a 122-residue protein sequence, read N- to C-terminus: Ribosome-binding factor A (122 aa).

Belongs to the RbfA family. Monomer. Binds 30S ribosomal subunits, but not 50S ribosomal subunits or 70S ribosomes.

The protein localises to the cytoplasm. One of several proteins that assist in the late maturation steps of the functional core of the 30S ribosomal subunit. Associates with free 30S ribosomal subunits (but not with 30S subunits that are part of 70S ribosomes or polysomes). Required for efficient processing of 16S rRNA. May interact with the 5'-terminal helix region of 16S rRNA. This is Ribosome-binding factor A from Polaromonas naphthalenivorans (strain CJ2).